The following is a 261-amino-acid chain: Thiazole synthase (261 aa).

Lysine 101 acts as the Schiff-base intermediate with DXP in catalysis. 1-deoxy-D-xylulose 5-phosphate contacts are provided by residues glycine 162, 188–189 (AG), and 210–211 (NT).

Belongs to the ThiG family. In terms of assembly, homotetramer. Forms heterodimers with either ThiH or ThiS.

The protein localises to the cytoplasm. It catalyses the reaction [ThiS sulfur-carrier protein]-C-terminal-Gly-aminoethanethioate + 2-iminoacetate + 1-deoxy-D-xylulose 5-phosphate = [ThiS sulfur-carrier protein]-C-terminal Gly-Gly + 2-[(2R,5Z)-2-carboxy-4-methylthiazol-5(2H)-ylidene]ethyl phosphate + 2 H2O + H(+). It participates in cofactor biosynthesis; thiamine diphosphate biosynthesis. In terms of biological role, catalyzes the rearrangement of 1-deoxy-D-xylulose 5-phosphate (DXP) to produce the thiazole phosphate moiety of thiamine. Sulfur is provided by the thiocarboxylate moiety of the carrier protein ThiS. In vitro, sulfur can be provided by H(2)S. The sequence is that of Thiazole synthase from Aromatoleum aromaticum (strain DSM 19018 / LMG 30748 / EbN1) (Azoarcus sp. (strain EbN1)).